The sequence spans 86 residues: Large ribosomal subunit protein bL28 (86 aa).

This sequence belongs to the bacterial ribosomal protein bL28 family.

The sequence is that of Large ribosomal subunit protein bL28 from Bacteroides thetaiotaomicron (strain ATCC 29148 / DSM 2079 / JCM 5827 / CCUG 10774 / NCTC 10582 / VPI-5482 / E50).